The sequence spans 163 residues: Large ribosomal subunit protein uL10 (163 aa).

It belongs to the universal ribosomal protein uL10 family. In terms of assembly, part of the ribosomal stalk of the 50S ribosomal subunit. The N-terminus interacts with L11 and the large rRNA to form the base of the stalk. The C-terminus forms an elongated spine to which L12 dimers bind in a sequential fashion forming a multimeric L10(L12)X complex.

Functionally, forms part of the ribosomal stalk, playing a central role in the interaction of the ribosome with GTP-bound translation factors. The chain is Large ribosomal subunit protein uL10 from Haemophilus influenzae (strain PittGG).